The sequence spans 574 residues: MPVSLSTALRVVGTSLFALAVLGGILAAYVTGYQFIHTEKHYLSFGLYGAILGLHLFIQSLFAFLEHRRMRAERQPVRLGRSVALCIAAYQEDPDYLKKCLLSVKRIAFPDLKVVMVVDGNGPDDTYMLDIFHDVMGSERAGSYVWRSNFHARGEGETEAGLQEGLAHVQALVRSTTYSCILQKWGGKREVMYTAFRALGDSVDYIQVCDSDTVLDPACTAEMLRILEADPRVGGVGGDVQVWRRGGDGTHGGTALALVALTPSPPQILNKYDSWISFLSSVRYWMAFNVERACQSYFGCVQCISGPLGMYRNALLQQFLEDWYHQTFLGTKCSFGDDRHLTNRVLSLGYQTKYTARSRCLTETPTRYLRWLNQQTRWSKSYFREWLYNALWFHKHHLWMTYESVVTGFFPFFLIATVIQLFYRGRIWNILLFLLTVQLVGIIKATYACFLRGSAEMIFVSLYALLYMSSLLPAKMFAIATINKSGWGTSGRRTIVVNFVGLLPVSVWAAVLLGGLAYTAYSQDLLSDTEVAFLISGAVLYACYWVALLTLYLAMVARRCGKRKEQCGLVFAEV.

The Cytoplasmic segment spans residues 1–15 (MPVSLSTALRVVGTS). The helical transmembrane segment at 16 to 36 (LFALAVLGGILAAYVTGYQFI) threads the bilayer. At 37–44 (HTEKHYLS) the chain is on the extracellular side. A helical membrane pass occupies residues 45–65 (FGLYGAILGLHLFIQSLFAFL). The Cytoplasmic portion of the chain corresponds to 66-398 (EHRRMRAERQ…NALWFHKHHL (333 aa)). The chain crosses the membrane as a helical span at residues 399–419 (WMTYESVVTGFFPFFLIATVI). At 420–429 (QLFYRGRIWN) the chain is on the extracellular side. A helical transmembrane segment spans residues 430 to 450 (ILLFLLTVQLVGIIKATYACF). Over 451–456 (LRGSAE) the chain is Cytoplasmic. The helical transmembrane segment at 457–477 (MIFVSLYALLYMSSLLPAKMF) threads the bilayer. Residues 478–494 (AIATINKSGWGTSGRRT) lie on the Extracellular side of the membrane. The chain crosses the membrane as a helical span at residues 495 to 515 (IVVNFVGLLPVSVWAAVLLGG). Topologically, residues 516 to 530 (LAYTAYSQDLLSDTE) are cytoplasmic. Residues 531–551 (VAFLISGAVLYACYWVALLTL) traverse the membrane as a helical segment. Residues 552 to 574 (YLAMVARRCGKRKEQCGLVFAEV) lie on the Extracellular side of the membrane.

Belongs to the NodC/HAS family. The cofactor is Mg(2+). In terms of processing, O-GlcNAcylation increases the hyaluronan synthase activity, HAS3 stability and its plasma membrane residence. The concentration of UDP-GlcNAc controls the level of O-GlcNAc modification.

The protein resides in the cell membrane. It localises to the golgi apparatus membrane. The protein localises to the golgi apparatus. It is found in the trans-Golgi network membrane. Its subcellular location is the cytoplasmic vesicle. It carries out the reaction [hyaluronan](n) + UDP-N-acetyl-alpha-D-glucosamine = N-acetyl-beta-D-glucosaminyl-(1-&gt;4)-[hyaluronan](n) + UDP + H(+). It catalyses the reaction N-acetyl-beta-D-glucosaminyl-(1-&gt;4)-[hyaluronan](n) + UDP-alpha-D-glucuronate = [hyaluronan](n+1) + UDP + H(+). The protein operates within glycan biosynthesis; hyaluronan biosynthesis. Functionally, catalyzes the addition of GlcNAc or GlcUA monosaccharides to the nascent hyaluronan polymer. Therefore, it is essential to hyaluronan synthesis a major component of most extracellular matrices that has a structural role in tissues architectures and regulates cell adhesion, migration and differentiation. This is one of three isoenzymes responsible for cellular hyaluronan synthesis. The chain is Hyaluronan synthase 3 (HAS3) from Gallus gallus (Chicken).